A 348-amino-acid chain; its full sequence is GTPase Obg (348 aa).

The Obg domain maps to 1–159 (MKFLDQARIY…MTLWLRLKLI (159 aa)). In terms of domain architecture, OBG-type G spans 160–327 (ADAGLVGLPN…TLQSLLAAID (168 aa)). Residues 166 to 173 (GLPNAGKS), 191 to 195 (FTTLH), 212 to 215 (DIPG), 279 to 282 (SKID), and 308 to 310 (SAA) each bind GTP. Mg(2+)-binding residues include Ser173 and Thr193.

The protein belongs to the TRAFAC class OBG-HflX-like GTPase superfamily. OBG GTPase family. Monomer. Mg(2+) serves as cofactor.

It is found in the cytoplasm. In terms of biological role, an essential GTPase which binds GTP, GDP and possibly (p)ppGpp with moderate affinity, with high nucleotide exchange rates and a fairly low GTP hydrolysis rate. Plays a role in control of the cell cycle, stress response, ribosome biogenesis and in those bacteria that undergo differentiation, in morphogenesis control. The protein is GTPase Obg of Beijerinckia indica subsp. indica (strain ATCC 9039 / DSM 1715 / NCIMB 8712).